A 54-amino-acid chain; its full sequence is MSFHLWMANLDAYMQETFGVGRRDIADWTYHDAYDDGLTFREAAHQAIANELGS.

This chain is Gene 87 protein (87), found in Mycobacterium (Mycobacteriophage D29).